We begin with the raw amino-acid sequence, 493 residues long: Probable cytochrome P450 6a13 (493 aa).

C435 contacts heme.

This sequence belongs to the cytochrome P450 family. Requires heme as cofactor.

It localises to the endoplasmic reticulum membrane. The protein localises to the microsome membrane. May be involved in the metabolism of insect hormones and in the breakdown of synthetic insecticides. The chain is Probable cytochrome P450 6a13 (Cyp6a13) from Drosophila melanogaster (Fruit fly).